The following is a 217-amino-acid chain: Trichothecene biosynthesis transcription regulator TRI6 (217 aa).

Residues 185 to 215 (VRCPWHDQEGQQCLRVFSRVDNMRDHYRRIH) form a C2H2-type zinc finger.

Its subcellular location is the nucleus. In terms of biological role, transcriptional activator of part of the core trichothecene biosynthesis cluster. The chain is Trichothecene biosynthesis transcription regulator TRI6 from Fusarium sporotrichioides.